The primary structure comprises 253 residues: 2-C-methyl-D-erythritol 4-phosphate cytidylyltransferase (253 aa).

The segment at 1–28 is disordered; that stretch reads MSVSSRPGRRRFALIPSAGTGTRAGGDL.

It belongs to the IspD/TarI cytidylyltransferase family. IspD subfamily.

It carries out the reaction 2-C-methyl-D-erythritol 4-phosphate + CTP + H(+) = 4-CDP-2-C-methyl-D-erythritol + diphosphate. It participates in isoprenoid biosynthesis; isopentenyl diphosphate biosynthesis via DXP pathway; isopentenyl diphosphate from 1-deoxy-D-xylulose 5-phosphate: step 2/6. In terms of biological role, catalyzes the formation of 4-diphosphocytidyl-2-C-methyl-D-erythritol from CTP and 2-C-methyl-D-erythritol 4-phosphate (MEP). In Ralstonia nicotianae (strain ATCC BAA-1114 / GMI1000) (Ralstonia solanacearum), this protein is 2-C-methyl-D-erythritol 4-phosphate cytidylyltransferase.